Reading from the N-terminus, the 201-residue chain is Holliday junction branch migration complex subunit RuvA (201 aa).

The domain I stretch occupies residues Met1–Arg63. Positions Thr64 to Leu142 are domain II. Positions Phe143–His153 are flexible linker. Residues His153–Lys201 form a domain III region.

It belongs to the RuvA family. As to quaternary structure, homotetramer. Forms an RuvA(8)-RuvB(12)-Holliday junction (HJ) complex. HJ DNA is sandwiched between 2 RuvA tetramers; dsDNA enters through RuvA and exits via RuvB. An RuvB hexamer assembles on each DNA strand where it exits the tetramer. Each RuvB hexamer is contacted by two RuvA subunits (via domain III) on 2 adjacent RuvB subunits; this complex drives branch migration. In the full resolvosome a probable DNA-RuvA(4)-RuvB(12)-RuvC(2) complex forms which resolves the HJ.

It is found in the cytoplasm. Its function is as follows. The RuvA-RuvB-RuvC complex processes Holliday junction (HJ) DNA during genetic recombination and DNA repair, while the RuvA-RuvB complex plays an important role in the rescue of blocked DNA replication forks via replication fork reversal (RFR). RuvA specifically binds to HJ cruciform DNA, conferring on it an open structure. The RuvB hexamer acts as an ATP-dependent pump, pulling dsDNA into and through the RuvAB complex. HJ branch migration allows RuvC to scan DNA until it finds its consensus sequence, where it cleaves and resolves the cruciform DNA. The sequence is that of Holliday junction branch migration complex subunit RuvA from Geobacillus sp. (strain WCH70).